Here is a 468-residue protein sequence, read N- to C-terminus: UDP-N-acetylmuramate--L-alanine ligase (468 aa).

An ATP-binding site is contributed by 118–124; that stretch reads GTHGKTT.

The protein belongs to the MurCDEF family.

The protein localises to the cytoplasm. It carries out the reaction UDP-N-acetyl-alpha-D-muramate + L-alanine + ATP = UDP-N-acetyl-alpha-D-muramoyl-L-alanine + ADP + phosphate + H(+). The protein operates within cell wall biogenesis; peptidoglycan biosynthesis. In terms of biological role, cell wall formation. This Roseobacter denitrificans (strain ATCC 33942 / OCh 114) (Erythrobacter sp. (strain OCh 114)) protein is UDP-N-acetylmuramate--L-alanine ligase.